Consider the following 546-residue polypeptide: Phosphatidylinositol 4-phosphate 5-kinase type-1 alpha (546 aa).

A PIPK domain is found at Thr-65 to Val-433. Lys-87 participates in a covalent cross-link: Glycyl lysine isopeptide (Lys-Gly) (interchain with G-Cter in ubiquitin). The tract at residues Pro-441–Gly-522 is disordered. A compositionally biased stretch (low complexity) spans Ser-449–Gly-461. A compositionally biased stretch (polar residues) spans Asn-462–Ala-471. Basic and acidic residues predominate over residues Gly-473–Arg-493.

In terms of assembly, interacts with RAC1. Interacts with TUT1. Forms a complex with CDH1/E-cadherin, CTNNB1/beta-catenin and CTNND1 at the plasma membrane upon calcium stimulation. Found in a ternary complex with IRS1 and DGKZ in the absence of insulin stimulation. Interacts with DGKZ. Interacts with PIP4K2C; the interaction inhibits PIP5K1A kinase activity.

Its subcellular location is the cell membrane. The protein resides in the cytoplasm. It localises to the nucleus. It is found in the nucleus speckle. The protein localises to the cell projection. Its subcellular location is the ruffle. The protein resides in the lamellipodium. It catalyses the reaction a 1,2-diacyl-sn-glycero-3-phospho-(1D-myo-inositol 4-phosphate) + ATP = a 1,2-diacyl-sn-glycero-3-phospho-(1D-myo-inositol-4,5-bisphosphate) + ADP + H(+). The enzyme catalyses 1-octadecanoyl-2-(5Z,8Z,11Z,14Z)-eicosatetraenoyl-sn-glycero-3-phospho-1D-myo-inositol 4-phosphate + ATP = 1-octadecanoyl-2-(5Z,8Z,11Z,14Z)-eicosatetraenoyl-sn-glycero-3-phospho-1D-myo-inositol 4,5-bisphosphate + ADP + H(+). The catalysed reaction is 1,2-dihexadecanoyl-sn-glycero-3-phospho-(1D-myo-inositol-4-phosphate) + ATP = 1,2-dihexadecanoyl-sn-glycero-3-phospho-(1D-myo-inositol-4,5-bisphosphate) + ADP + H(+). It carries out the reaction 1-octadecanoyl-2-(9Z)-octadecenoyl-sn-glycero-3-phospho-1D-myo-inositol 4-phosphate + ATP = 1-octadecanoyl-2-(9Z)-octadecenoyl-sn-glycero-3-phospho-1D-myo-inositol 4,5-bisphosphate + ADP + H(+). It catalyses the reaction 1-octadecanoyl-2-(9Z)-octadecenoyl-sn-glycero-3-phospho-1D-myo-inositol + ATP = 1-octadecanoyl-2-(9Z)-octadecenoyl-sn-glycero-3-phospho-1D-myo-inositol 5-phosphate + ADP + H(+). The enzyme catalyses 1-octadecanoyl-2-(9Z,12Z)-octadecadienoyl-sn-glycero-3-phospho-1D-myo-inositol + ATP = 1-octadecanoyl-2-(9Z,12Z)-octadecadienoyl-sn-glycero-3-phospho-1D-myo-inositol 5-phosphate + ADP + H(+). The catalysed reaction is 1-octadecanoyl-2-(5Z,8Z,11Z,14Z-eicosatetraenoyl)-sn-glycero-3-phospho-(1D-myo-inositol) + ATP = 1-octadecanoyl-2-(5Z,8Z,11Z,14Z)-eicosatetraenoyl-sn-glycero-3-phospho-1D-myo-inositol 5-phosphate + ADP + H(+). It carries out the reaction 1,2-di-(9Z,12Z)-octadecadienoyl-sn-glycero-3-phospho-1D-myo-inositol + ATP = 1,2-di(9Z,12Z)-octadecadienoyl-sn-glycero-3-phospho-1D-myo-inositol 5-phosphate + ADP + H(+). Functionally, catalyzes the phosphorylation of phosphatidylinositol 4-phosphate (PtdIns(4)P/PI4P) to form phosphatidylinositol 4,5-bisphosphate (PtdIns(4,5)P2/PIP2), a lipid second messenger that regulates several cellular processes such as signal transduction, vesicle trafficking, actin cytoskeleton dynamics, cell adhesion, and cell motility. PtdIns(4,5)P2 can directly act as a second messenger or can be utilized as a precursor to generate other second messengers: inositol 1,4,5-trisphosphate (IP3), diacylglycerol (DAG) or phosphatidylinositol-3,4,5-trisphosphate (PtdIns(3,4,5)P3/PIP3). PIP5K1A-mediated phosphorylation of PtdIns(4)P is the predominant pathway for PtdIns(4,5)P2 synthesis. Can also use phosphatidylinositol (PtdIns) as substrate in vitro. Together with PIP5K1C, is required for phagocytosis, both enzymes regulating different types of actin remodeling at sequential steps. Promotes particle ingestion by activating the WAS GTPase-binding protein that induces Arp2/3 dependent actin polymerization at the nascent phagocytic cup. Together with PIP5K1B, is required, after stimulation by G-protein coupled receptors, for the synthesis of IP3 that will induce stable platelet adhesion. Recruited to the plasma membrane by the E-cadherin/beta-catenin complex where it provides the substrate PtdIns(4,5)P2 for the production of PtdIns(3,4,5)P3, IP3 and DAG, that will mobilize internal calcium and drive keratinocyte differentiation. Positively regulates insulin-induced translocation of SLC2A4 to the cell membrane in adipocytes. Together with PIP5K1C has a role during embryogenesis. Independently of its catalytic activity, is required for membrane ruffling formation, actin organization and focal adhesion formation during directional cell migration by controlling integrin-induced translocation of the small GTPase RAC1 to the plasma membrane. Also functions in the nucleus where it acts as an activator of TUT1 adenylyltransferase activity in nuclear speckles, thereby regulating mRNA polyadenylation of a select set of mRNAs. The polypeptide is Phosphatidylinositol 4-phosphate 5-kinase type-1 alpha (Rattus norvegicus (Rat)).